The chain runs to 458 residues: Transmembrane protein 135 (458 aa).

The next 6 helical transmembrane spans lie at 68 to 88 (ILQSASFLTANGALFMAFFCI), 96 to 116 (FYLWSPGFGAALPASYVAILV), 149 to 169 (TLRNGEVLLFCITAAMYMFFF), 298 to 318 (FQLGAFLGSFVSIYKGTSCFL), 331 to 351 (IIAGFLAGVSMMFYKSTTISM), and 380 to 400 (IIYSISTAICFQAAVMEVQTL).

Belongs to the TMEM135 family.

The protein localises to the mitochondrion membrane. It localises to the peroxisome membrane. In terms of biological role, involved in mitochondrial metabolism by regulating the balance between mitochondrial fusion and fission. May act as a regulator of mitochondrial fission that promotes DNM1L-dependent fission through activation of DNM1L. May be involved in peroxisome organization. The protein is Transmembrane protein 135 of Bos taurus (Bovine).